The chain runs to 913 residues: Isoleucine--tRNA ligase (913 aa).

The 'HIGH' region signature appears at 57 to 67 (PYANGDIHLGT). Glutamate 549 serves as a coordination point for L-isoleucyl-5'-AMP. The 'KMSKS' region signature appears at 590–594 (KMSKS). Lysine 593 contributes to the ATP binding site. Residues cysteine 881, cysteine 884, cysteine 901, and cysteine 904 each coordinate Zn(2+).

It belongs to the class-I aminoacyl-tRNA synthetase family. IleS type 1 subfamily. In terms of assembly, monomer. It depends on Zn(2+) as a cofactor.

It localises to the cytoplasm. It catalyses the reaction tRNA(Ile) + L-isoleucine + ATP = L-isoleucyl-tRNA(Ile) + AMP + diphosphate. Functionally, catalyzes the attachment of isoleucine to tRNA(Ile). As IleRS can inadvertently accommodate and process structurally similar amino acids such as valine, to avoid such errors it has two additional distinct tRNA(Ile)-dependent editing activities. One activity is designated as 'pretransfer' editing and involves the hydrolysis of activated Val-AMP. The other activity is designated 'posttransfer' editing and involves deacylation of mischarged Val-tRNA(Ile). This is Isoleucine--tRNA ligase from Fervidobacterium nodosum (strain ATCC 35602 / DSM 5306 / Rt17-B1).